We begin with the raw amino-acid sequence, 72 residues long: Conotoxin Lt6.3 (72 aa).

An N-terminal signal peptide occupies residues 1 to 22 (MKLTSVVIVAVLFLAACQLTTS). The propeptide occupies 23 to 46 (DGSRGTWKDRAVRSITKVSMLRWP). Intrachain disulfides connect Cys47–Cys61, Cys54–Cys64, and Cys60–Cys71.

The protein belongs to the conotoxin O1 superfamily. As to expression, expressed by the venom duct.

It localises to the secreted. The protein is Conotoxin Lt6.3 of Conus litteratus (Lettered cone).